We begin with the raw amino-acid sequence, 205 residues long: E3 ubiquitin-protein ligase complex slx8-rfp subunit rfp2 (205 aa).

The RING-type; degenerate zinc finger occupies 147–190 (CAKCGNELVSDEKKSIFAAKCGHLFCSTCAKELRKKTVPCPVQH).

In terms of assembly, part of an E3 ubiquitin complex including rfp1, rfp2 and slx8. Interacts with slx8.

The protein localises to the nucleus. The enzyme catalyses S-ubiquitinyl-[E2 ubiquitin-conjugating enzyme]-L-cysteine + [acceptor protein]-L-lysine = [E2 ubiquitin-conjugating enzyme]-L-cysteine + N(6)-ubiquitinyl-[acceptor protein]-L-lysine.. It participates in protein modification; protein ubiquitination. Mediates ubiquitination and subsequent desumoylation/degradation of sumoylated proteins and proteins containing SUMO-like domains. Involved in maintaining genome stability where it acts in the cellular response to DNA damage. The sequence is that of E3 ubiquitin-protein ligase complex slx8-rfp subunit rfp2 (rfp2) from Schizosaccharomyces pombe (strain 972 / ATCC 24843) (Fission yeast).